The sequence spans 295 residues: Xyloglucan endotransglucosylase protein 2 (295 aa).

An N-terminal signal peptide occupies residues Met-1–Gly-23. Residues Ala-24–Tyr-222 form the GH16 domain. The Nucleophile role is filled by Glu-108. The active-site Proton donor is the Glu-112. Glu-112 contacts xyloglucan. Asn-116 carries an N-linked (GlcNAc...) asparagine glycan. Residues Gln-125–Asn-127, Asp-135–Glu-137, Asp-201–Trp-202, and Gly-206 contribute to the xyloglucan site. Intrachain disulfides connect Cys-230–Cys-239 and Cys-276–Cys-289. Position 281 (Arg-281) interacts with xyloglucan.

The protein belongs to the glycosyl hydrolase 16 family. XTH group 1 subfamily. Contains at least one intrachain disulfide bond essential for its enzymatic activity. As to expression, expressed in fruit pulp.

It localises to the secreted. The protein localises to the cell wall. The protein resides in the extracellular space. It is found in the apoplast. The enzyme catalyses breaks a beta-(1-&gt;4) bond in the backbone of a xyloglucan and transfers the xyloglucanyl segment on to O-4 of the non-reducing terminal glucose residue of an acceptor, which can be a xyloglucan or an oligosaccharide of xyloglucan.. Functionally, catalyzes xyloglucan endotransglycosylation (XET). Cleaves and religates xyloglucan polymers. Does not catalyze xyloglucan endohydrolysis (XEH). Probably involved in cell wall restructuring during fruit ripening and postharvest fruit softening. This Diospyros kaki (Kaki persimmon) protein is Xyloglucan endotransglucosylase protein 2.